The chain runs to 347 residues: Ketol-acid reductoisomerase (NADP(+)) (347 aa).

One can recognise a KARI N-terminal Rossmann domain in the interval 3–182 (TKMFYDKDID…GSGCAGILET (180 aa)). NADP(+)-binding positions include 26–29 (YGAQ), Arg49, Ser53, and 83–86 (DELQ). The active site involves His108. Gly134 serves as a coordination point for NADP(+). In terms of domain architecture, KARI C-terminal knotted spans 183-328 (TFEEETTEDL…KKVRAMMPWI (146 aa)). Asp191, Glu195, Glu227, and Glu231 together coordinate Mg(2+). Position 252 (Ser252) interacts with substrate.

The protein belongs to the ketol-acid reductoisomerase family. The cofactor is Mg(2+).

The catalysed reaction is (2R)-2,3-dihydroxy-3-methylbutanoate + NADP(+) = (2S)-2-acetolactate + NADPH + H(+). It carries out the reaction (2R,3R)-2,3-dihydroxy-3-methylpentanoate + NADP(+) = (S)-2-ethyl-2-hydroxy-3-oxobutanoate + NADPH + H(+). The protein operates within amino-acid biosynthesis; L-isoleucine biosynthesis; L-isoleucine from 2-oxobutanoate: step 2/4. It participates in amino-acid biosynthesis; L-valine biosynthesis; L-valine from pyruvate: step 2/4. In terms of biological role, involved in the biosynthesis of branched-chain amino acids (BCAA). Catalyzes an alkyl-migration followed by a ketol-acid reduction of (S)-2-acetolactate (S2AL) to yield (R)-2,3-dihydroxy-isovalerate. In the isomerase reaction, S2AL is rearranged via a Mg-dependent methyl migration to produce 3-hydroxy-3-methyl-2-ketobutyrate (HMKB). In the reductase reaction, this 2-ketoacid undergoes a metal-dependent reduction by NADPH to yield (R)-2,3-dihydroxy-isovalerate. In Leuconostoc mesenteroides subsp. cremoris, this protein is Ketol-acid reductoisomerase (NADP(+)).